A 102-amino-acid chain; its full sequence is MNQERLLQVILAPIVSEKSTMIAEKNQQVAFRVAKDATKPEIKAAVEMLFNVKVDGVSTVNVKGKVKRFGRTIGRRSDWKKAYVSLVDGQELDLTATPAAAE.

The protein belongs to the universal ribosomal protein uL23 family. As to quaternary structure, part of the 50S ribosomal subunit. Contacts protein L29, and trigger factor when it is bound to the ribosome.

Its function is as follows. One of the early assembly proteins it binds 23S rRNA. One of the proteins that surrounds the polypeptide exit tunnel on the outside of the ribosome. Forms the main docking site for trigger factor binding to the ribosome. The sequence is that of Large ribosomal subunit protein uL23 from Chromobacterium violaceum (strain ATCC 12472 / DSM 30191 / JCM 1249 / CCUG 213 / NBRC 12614 / NCIMB 9131 / NCTC 9757 / MK).